We begin with the raw amino-acid sequence, 218 residues long: Large ribosomal subunit protein uL3 (218 aa).

This sequence belongs to the universal ribosomal protein uL3 family. Part of the 50S ribosomal subunit. Forms a cluster with proteins L14 and L19.

One of the primary rRNA binding proteins, it binds directly near the 3'-end of the 23S rRNA, where it nucleates assembly of the 50S subunit. In Brachyspira pilosicoli (Serpulina pilosicoli), this protein is Large ribosomal subunit protein uL3.